The primary structure comprises 231 residues: 7-cyano-7-deazaguanine synthase (231 aa).

8–18 (FSGGQDSTTCL) is a binding site for ATP. 4 residues coordinate Zn(2+): C188, C197, C200, and C203.

The protein belongs to the QueC family. It depends on Zn(2+) as a cofactor.

The enzyme catalyses 7-carboxy-7-deazaguanine + NH4(+) + ATP = 7-cyano-7-deazaguanine + ADP + phosphate + H2O + H(+). The protein operates within purine metabolism; 7-cyano-7-deazaguanine biosynthesis. Functionally, catalyzes the ATP-dependent conversion of 7-carboxy-7-deazaguanine (CDG) to 7-cyano-7-deazaguanine (preQ(0)). This is 7-cyano-7-deazaguanine synthase from Escherichia coli (strain SMS-3-5 / SECEC).